Consider the following 312-residue polypeptide: Malate dehydrogenase (312 aa).

NAD(+) contacts are provided by residues 7–13 (GAAGGIG) and Asp-34. Residues Arg-81 and Arg-87 each coordinate substrate. Residues Asn-94 and 117–119 (ITN) contribute to the NAD(+) site. Residues Asn-119 and Arg-153 each contribute to the substrate site. Residue His-177 is the Proton acceptor of the active site. Position 227 (Met-227) interacts with NAD(+).

This sequence belongs to the LDH/MDH superfamily. MDH type 1 family. Homodimer.

It carries out the reaction (S)-malate + NAD(+) = oxaloacetate + NADH + H(+). Catalyzes the reversible oxidation of malate to oxaloacetate. The sequence is that of Malate dehydrogenase from Escherichia coli (strain SE11).